The sequence spans 361 residues: Hydroxymethylglutaryl-CoA synthase (361 aa).

E92 acts as the Proton donor/acceptor in catalysis. C124 serves as the catalytic Acyl-thioester intermediate. The (3S)-3-hydroxy-3-methylglutaryl-CoA site is built by C124, S165, T214, and H247. H247 acts as the Proton donor/acceptor in catalysis. Residue K252 coordinates CoA. K256, N279, and S309 together coordinate (3S)-3-hydroxy-3-methylglutaryl-CoA.

Belongs to the thiolase-like superfamily. Archaeal HMG-CoA synthase family. In terms of assembly, interacts with acetoacetyl-CoA thiolase that catalyzes the precedent step in the pathway and with a DUF35 protein. The acetoacetyl-CoA thiolase/HMG-CoA synthase complex channels the intermediate via a fused CoA-binding site, which allows for efficient coupling of the endergonic thiolase reaction with the exergonic HMGCS reaction.

It catalyses the reaction acetoacetyl-CoA + acetyl-CoA + H2O = (3S)-3-hydroxy-3-methylglutaryl-CoA + CoA + H(+). It participates in metabolic intermediate biosynthesis; (R)-mevalonate biosynthesis; (R)-mevalonate from acetyl-CoA: step 2/3. Functionally, catalyzes the condensation of acetyl-CoA with acetoacetyl-CoA to form 3-hydroxy-3-methylglutaryl-CoA (HMG-CoA). Functions in the mevalonate (MVA) pathway leading to isopentenyl diphosphate (IPP), a key precursor for the biosynthesis of isoprenoid compounds that are building blocks of archaeal membrane lipids. In Aeropyrum pernix (strain ATCC 700893 / DSM 11879 / JCM 9820 / NBRC 100138 / K1), this protein is Hydroxymethylglutaryl-CoA synthase.